A 355-amino-acid polypeptide reads, in one-letter code: MPAHMLQEISSSYTTTTTITAPPSGNEREKVKTVPLHLEEDIRPEMKEDIHDPTYQDEEGPPPKLEYVWRNIILMVLLHLGGLYGIILVPSCKLYTCLFGIFYYMTSALGITAGAHRLWSHRTYKARLPLRIFLIIANTMAFQNDVYEWARDHRAHHKFSETHADPHNSRRGFFFSHVGWLLVRKHPAVKEKGGKLDMSDLKAEKLVMFQRRYYKPGLLLMCFILPTLVPWYCWGETFVNSLFVSTFLRYTLVLNATWLVNSAAHLYGYRPYDKNIQSRENILVSLGAVGEGFHNYHHTFPFDYSASEYRWHINFTTFFIDCMAALGLAYDRKKVSKATVLARIKRTGDGSHKSS.

Topologically, residues 1-68 are cytoplasmic; it reads MPAHMLQEIS…EGPPPKLEYV (68 aa). A compositionally biased stretch (low complexity) spans 9–20; that stretch reads ISSSYTTTTTIT. A disordered region spans residues 9-33; that stretch reads ISSSYTTTTTITAPPSGNEREKVKT. Residues 69–89 form a helical membrane-spanning segment; the sequence is WRNIILMVLLHLGGLYGIILV. Residue Asn-71 coordinates substrate. The Lumenal segment spans residues 90 to 93; it reads PSCK. A helical membrane pass occupies residues 94–114; the sequence is LYTCLFGIFYYMTSALGITAG. Over 115–213 the chain is Cytoplasmic; the sequence is AHRLWSHRTY…EKLVMFQRRY (99 aa). Residues His-116 and His-121 each coordinate Fe cation. Positions 116–121 match the Histidine box-1 motif; the sequence is HRLWSH. Asn-144, Arg-151, and Asp-152 together coordinate substrate. Residues His-153, His-156, and His-157 each contribute to the Fe cation site. Positions 153–157 match the Histidine box-2 motif; sequence HRAHH. Positions 184 and 185 each coordinate substrate. The chain crosses the membrane as a helical span at residues 214 to 233; the sequence is YKPGLLLMCFILPTLVPWYC. At 234 to 237 the chain is on the lumenal side; sequence WGET. A helical membrane pass occupies residues 238–259; sequence FVNSLFVSTFLRYTLVLNATWL. Trp-258 provides a ligand contact to substrate. Topologically, residues 260-355 are cytoplasmic; that stretch reads VNSAAHLYGY…RTGDGSHKSS (96 aa). Positions 265, 294, 297, and 298 each coordinate Fe cation. Residues 294–298 carry the Histidine box-3 motif; sequence HNYHH.

This sequence belongs to the fatty acid desaturase type 1 family. It depends on Fe(2+) as a cofactor. Detected in liver (at protein level). Detected in skin and liver. Detected in sebaceous gland, but not in hair follicle. Detected in white and brown adipose tissue, eyelid, Harderian gland, and at lower levels in Meibomian gland, eyeball and adrenal gland. Highly expressed in liver, and detected at low levels in brain, heart, lung, stomach, skeletal muscle and kidney.

Its subcellular location is the endoplasmic reticulum membrane. It is found in the microsome membrane. It carries out the reaction octadecanoyl-CoA + 2 Fe(II)-[cytochrome b5] + O2 + 2 H(+) = (9Z)-octadecenoyl-CoA + 2 Fe(III)-[cytochrome b5] + 2 H2O. Its function is as follows. Stearoyl-CoA desaturase that utilizes O(2) and electrons from reduced cytochrome b5 to introduce the first double bond into saturated fatty acyl-CoA substrates. Catalyzes the insertion of a cis double bond at the Delta-9 position into fatty acyl-CoA substrates including palmitoyl-CoA and stearoyl-CoA. Gives rise to a mixture of 16:1 and 18:1 unsaturated fatty acids. Plays an important role in lipid biosynthesis. Plays an important role in regulating the expression of genes that are involved in lipogenesis and in regulating mitochondrial fatty acid oxidation. Plays an important role in body energy homeostasis. Contributes to the biosynthesis of membrane phospholipids, cholesterol esters and triglycerides. Required for normal development of sebaceous glands. Required for the biosynthesis of normal levels of Delta-9 unsaturated fatty acids and 1-alkyl-2,3-diacylglycerol in the Harderian gland. Required for normal production of meibum, an oily material that prevents drying of the cornea. The protein is Acyl-CoA desaturase 1 (Scd1) of Mus musculus (Mouse).